Here is a 548-residue protein sequence, read N- to C-terminus: Natural resistance-associated macrophage protein 1 (548 aa).

Residues 1–38 are disordered; it reads MSGDTGPPKQGGTRYGSISSPPSPEPQQAPPGGTYLSE. Residues 1-55 are Cytoplasmic-facing; sequence MSGDTGPPKQGGTRYGSISSPPSPEPQQAPPGGTYLSEKIPIPDTESGTFSLRKL. A helical membrane pass occupies residues 56–73; that stretch reads WAFTGPGFLMSIAFLDPG. Over 74 to 82 the chain is Extracellular; that stretch reads NIESDLQAG. The chain crosses the membrane as a helical span at residues 83–102; sequence AVAGFKLLWVLLWATVLGLL. The Cytoplasmic segment spans residues 103-139; the sequence is CQRLAARLGVVTGKDLGEVCHLYYPKVPRILLWLTIE. A helical membrane pass occupies residues 140-160; that stretch reads LAIVGSDMQEVIGTAIAFSLL. Residues 161 to 164 are Extracellular-facing; the sequence is SAGR. Residues 165-184 form a helical membrane-spanning segment; sequence IPLWGGVLITIVDAFFFLFL. The Cytoplasmic portion of the chain corresponds to 185 to 193; it reads DNYGLRKLE. Residues 194-214 traverse the membrane as a helical segment; sequence AFFGFLITIMALTFGYEYVVA. At 215–237 the chain is on the extracellular side; it reads QPAQGALLQGLFLPSCPGCGQPE. A helical transmembrane segment spans residues 238–256; that stretch reads LLQAVGIIGAIIMPHNIYL. The Cytoplasmic segment spans residues 257 to 284; sequence HSSLVKSREVDRSRRADIREANMYFLIE. Residues 285–304 traverse the membrane as a helical segment; the sequence is ATIALSVSFLINLFVMAVFG. Topologically, residues 305–346 are extracellular; sequence QAFYKQTNQAAFNICANSSLQDYAPIFPRNNLTVAVDIYQGG. N-linked (GlcNAc...) asparagine glycans are attached at residues N321 and N335. The chain crosses the membrane as a helical span at residues 347–366; sequence VILGCLFGPAALYIWAVGLL. The Cytoplasmic portion of the chain corresponds to 367 to 397; that stretch reads AAGQSSTMTGTYAGQFVMEGFLKLRWSRFAR. Residues 398–415 traverse the membrane as a helical segment; it reads VLLTRSCAILPTVLLAVF. At 416–426 the chain is on the extracellular side; that stretch reads RDLRDLSGLND. The helical transmembrane segment at 427–447 threads the bilayer; it reads LLNVLQSLLLPFAVLPILTFT. The Cytoplasmic portion of the chain corresponds to 448–463; the sequence is SMPALMREFANGLVSK. Residues 464–485 form a helical membrane-spanning segment; that stretch reads VITSSIMVLVCAVNLYFVISYV. Over 486-493 the chain is Extracellular; it reads PSLPHPAY. Residues 494-513 traverse the membrane as a helical segment; sequence FSLVALLAAAYLGLTTYLVW. Over 514–548 the chain is Cytoplasmic; the sequence is TCLITQGATLLAHSSHQRFLYGLPEEDQEKGRTSG.

It belongs to the NRAMP family.

It is found in the late endosome membrane. The protein resides in the lysosome membrane. The enzyme catalyses Zn(2+)(in) + H(+)(out) = Zn(2+)(out) + H(+)(in). It carries out the reaction Fe(2+)(in) + H(+)(out) = Fe(2+)(out) + H(+)(in). The catalysed reaction is Mn(2+)(in) + H(+)(out) = Mn(2+)(out) + H(+)(in). Functionally, macrophage-specific antiporter that fluxes metal ions in either direction against a proton gradient. Localized to late endosomal lysosomal membranes, delivers bivalent cations from the cytosol into these acidic compartments where they may directly affect antimicrobial activity. Involved in iron metabolism and host natural resistance to infection with intracellular parasites. Pathogen resistance involves sequestration of Fe(2+) and Mn(2+), cofactors of both prokaryotic and eukaryotic catalases and superoxide dismutases, not only to protect the macrophage against its own generation of reactive oxygen species, but to deny the cations to the pathogen for synthesis of its protective enzymes. This Bison bison (American bison) protein is Natural resistance-associated macrophage protein 1 (SLC11A1).